Consider the following 209-residue polypeptide: MGKVYVFDHPLIQHKLTYIRDKNTGTKEFRELVDEVATLMAFEITRDLPLEEVEIETPVSKARAKVIAGKKLGVIPILRAGIGMVDGILKLIPAAKVGHIGLYRDPQTLKPVEYYVKLPSDVEERDFIIVDPMLATGGSAVAAIDALKKRGAKSIKFMCLIAAPGRVKAVETAHPDVDIYIAALDERLNDHGYIVPGLGDAGDRLFGTK.

5-phospho-alpha-D-ribose 1-diphosphate contacts are provided by residues arginine 79, arginine 104, and 131-139 (DPMLATGGS). Residues isoleucine 194 and 199 to 201 (GDA) contribute to the uracil site. Aspartate 200 is a binding site for 5-phospho-alpha-D-ribose 1-diphosphate.

The protein belongs to the UPRTase family. As to quaternary structure, homodimer. It depends on Mg(2+) as a cofactor.

The catalysed reaction is UMP + diphosphate = 5-phospho-alpha-D-ribose 1-diphosphate + uracil. It participates in pyrimidine metabolism; UMP biosynthesis via salvage pathway; UMP from uracil: step 1/1. With respect to regulation, allosterically activated by GTP. In terms of biological role, catalyzes the conversion of uracil and 5-phospho-alpha-D-ribose 1-diphosphate (PRPP) to UMP and diphosphate. The chain is Uracil phosphoribosyltransferase from Bacillus caldolyticus.